An 88-amino-acid chain; its full sequence is Small ribosomal subunit protein bS16 (88 aa).

This sequence belongs to the bacterial ribosomal protein bS16 family.

The protein is Small ribosomal subunit protein bS16 of Staphylococcus saprophyticus subsp. saprophyticus (strain ATCC 15305 / DSM 20229 / NCIMB 8711 / NCTC 7292 / S-41).